A 2873-amino-acid chain; its full sequence is WD repeat-containing protein 87 (2873 aa).

WD repeat units follow at residues 108 to 146, 199 to 239, 242 to 283, 368 to 407, 415 to 460, 516 to 553, and 565 to 604; these read PCRFNISCLCYDPEMKMLLSGILGAVVTWVIELGGTGLQ, TSSG…PLHS, AHQS…RRLE, SILDQAVDWAYDPGKEELFVATGSSEVLVFDTTRCPCPAK, NSQD…RLEK, LSSCHLTHLILLPKSVGAITETNCLRLWKFHDFLSSGS, and LHLCAITSFDVCLSLSLFVTGSADGSVRIWDFHGRLIGIL. Disordered regions lie at residues 1049–1124, 1177–1199, 1392–1413, 1531–1607, and 2199–2338; these read FSLD…ESGT, DKRDKKATAQKLKKKHKKKGKEA, EKKTFQKSPKQGRKAVQKERKV, SKSK…QEER, and KRKE…EEVD. Basic residues-rich tracts occupy residues 1089 to 1101 and 1187 to 1197; these read VKKHSQKWLRGLK and KLKKKHKKKGK. A compositionally biased stretch (basic and acidic residues) spans 1549 to 1574; it reads EVSREGEEKEQQVTEEQRHIQEEHKW. Over residues 1575–1586 the composition is skewed to basic residues; it reads ARIHRKRARAEK. Composition is skewed to basic and acidic residues over residues 1587–1607 and 2204–2213; these read KRAQEERKLAQEEEKLAQEER and KRGDKPKEKF. Positions 2244 to 2276 are enriched in acidic residues; that stretch reads SSEEEEEREEEEEREEEEEREEEEERKEEEEGE. The segment covering 2277–2287 has biased composition (basic and acidic residues); sequence EKQVEKEEEEK. Acidic residues predominate over residues 2304–2337; it reads EVFEEKEEIMSEEETESLSDEEEEEESCSLEEEV.

This Homo sapiens (Human) protein is WD repeat-containing protein 87 (WDR87).